The chain runs to 147 residues: Large ribosomal subunit protein uL15 (147 aa).

The interval 1 to 55 (MKLDNLAPQPGAKKRKRRVGRGIAAGQGASCGFGMRGQKSRSGRPTRPGFEGGQM) is disordered. Positions 23–35 (IAAGQGASCGFGM) are enriched in gly residues.

Belongs to the universal ribosomal protein uL15 family. In terms of assembly, part of the 50S ribosomal subunit.

Binds to the 23S rRNA. This is Large ribosomal subunit protein uL15 from Synechococcus elongatus (strain ATCC 33912 / PCC 7942 / FACHB-805) (Anacystis nidulans R2).